The primary structure comprises 406 residues: 2,3-bisphosphoglycerate-independent phosphoglycerate mutase (406 aa).

The tract at residues 164–184 (VSSNDPKKTGVQPKTIHPDDD) is disordered.

This sequence belongs to the BPG-independent phosphoglycerate mutase family. A-PGAM subfamily.

It carries out the reaction (2R)-2-phosphoglycerate = (2R)-3-phosphoglycerate. It functions in the pathway carbohydrate degradation; glycolysis; pyruvate from D-glyceraldehyde 3-phosphate: step 3/5. In terms of biological role, catalyzes the interconversion of 2-phosphoglycerate and 3-phosphoglycerate. The chain is 2,3-bisphosphoglycerate-independent phosphoglycerate mutase from Methanocorpusculum labreanum (strain ATCC 43576 / DSM 4855 / Z).